The primary structure comprises 2175 residues: Genome polyprotein (2175 aa).

The N-myristoyl glycine; by host moiety is linked to residue G2. Over 2-1485 (GAQLSRNTAG…NVNRALAVIQ (1484 aa)) the chain is Cytoplasmic. Amphipathic alpha-helix stretches follow at residues 557–574 (ILQNDPGKMLKDAIDKQV) and 560–581 (NDPGKMLKDAIDKQVAGALVAG). Residues H861 and D879 each act as for protease 2A activity in the active site. Zn(2+) contacts are provided by C896 and C898. C950 serves as the catalytic For protease 2A activity. Zn(2+) contacts are provided by C956 and H958. A membrane-binding region spans residues 1090–1162 (SDNWMKKFTE…EHSSASQERQ (73 aa)). The interval 1090-1228 (SDNWMKKFTE…SPGTGQSLAT (139 aa)) is oligomerization. The interval 1111–1115 (AAKIS) is RNA-binding. The region spanning 1194-1352 (EKRVLGAMQF…YKRDGVTLDV (159 aa)) is the SF3 helicase domain. C1359, C1370, and C1375 together coordinate Zn(2+). The segment at 1359-1375 (CEDCSPANFKKCMPLIC) adopts a C4-type; degenerate zinc-finger fold. Residues 1403–1410 (ESNRRYNI) are RNA-binding. The segment at 1414-1419 (LEALFQ) is oligomerization. Residues 1486–1501 (SVSLIAAVAGTIYIVY) lie within the membrane without spanning it. At 1502–2175 (RLFSGMQGPY…ALERKWYDSF (674 aa)) the chain is on the cytoplasmic side. Y1511 bears the O-(5'-phospho-RNA)-tyrosine mark. In terms of domain architecture, Peptidase C3 spans 1532-1710 (GPLFDFGVSL…FAASLLRRYF (179 aa)). Residues H1571, E1602, and C1678 each act as for protease 3C activity in the active site. One can recognise a RdRp catalytic domain in the interval 1941-2056 (GELFGFDYTA…SYPYEIDASL (116 aa)). Mg(2+) is bound by residues D1947 and D2042.

The protein belongs to the picornaviruses polyprotein family. As to quaternary structure, interacts with capsid protein VP1 and capsid protein VP3 to form heterotrimeric protomers. Interacts with capsid protein VP0, and capsid protein VP3 to form heterotrimeric protomers. Five protomers subsequently associate to form pentamers which serve as building blocks for the capsid. Interacts with capsid protein VP2, capsid protein VP3 and capsid protein VP4 following cleavage of capsid protein VP0. In terms of assembly, interacts with capsid protein VP1 and capsid protein VP3 in the mature capsid. As to quaternary structure, interacts with capsid protein VP0 and capsid protein VP1 to form heterotrimeric protomers. Five protomers subsequently associate to form pentamers which serve as building blocks for the capsid. Interacts with capsid protein VP4 in the mature capsid. Interacts with protein 2C; this interaction may be important for virion morphogenesis. Interacts with capsid protein VP1 and capsid protein VP3. In terms of assembly, homodimer. As to quaternary structure, homohexamer; forms a hexameric ring structure with 6-fold symmetry characteristic of AAA+ ATPases. Interacts (via N-terminus) with host RTN3 (via reticulon domain); this interaction is important for viral replication. Interacts with capsid protein VP3; this interaction may be important for virion morphogenesis. Interacts with protein 3CD. In terms of assembly, homodimer. Interacts with host GBF1. Interacts (via GOLD domain) with host ACBD3 (via GOLD domain); this interaction allows the formation of a viral protein 3A/ACBD3 heterotetramer with a 2:2 stoichiometry, which will stimulate the recruitment of host PI4KB in order to synthesize PI4P at the viral RNA replication sites. As to quaternary structure, interacts with RNA-directed RNA polymerase. Interacts with protein 3AB and with RNA-directed RNA polymerase. In terms of assembly, interacts with Viral protein genome-linked and with protein 3CD. Mg(2+) is required as a cofactor. In terms of processing, specific enzymatic cleavages in vivo by the viral proteases yield processing intermediates and the mature proteins. Post-translationally, myristoylation is required for the formation of pentamers during virus assembly. Further assembly of 12 pentamers and a molecule of genomic RNA generates the provirion. During virion maturation, immature virions are rendered infectious following cleavage of VP0 into VP4 and VP2. This maturation seems to be an autocatalytic event triggered by the presence of RNA in the capsid and it is followed by a conformational change infectious virion. In terms of processing, myristoylation is required during RNA encapsidation and formation of the mature virus particle. Post-translationally, VPg is uridylylated by the polymerase into VPg-pUpU. This acts as a nucleotide-peptide primer for the genomic RNA replication.

The protein resides in the virion. It is found in the host cytoplasm. Its subcellular location is the host cytoplasmic vesicle membrane. It localises to the host nucleus. The enzyme catalyses a ribonucleoside 5'-triphosphate + H2O = a ribonucleoside 5'-diphosphate + phosphate + H(+). The catalysed reaction is Selective cleavage of Tyr-|-Gly bond in the picornavirus polyprotein.. It carries out the reaction RNA(n) + a ribonucleoside 5'-triphosphate = RNA(n+1) + diphosphate. It catalyses the reaction Selective cleavage of Gln-|-Gly bond in the poliovirus polyprotein. In other picornavirus reactions Glu may be substituted for Gln, and Ser or Thr for Gly.. Its activity is regulated as follows. Replication or transcription is subject to high level of random mutations by the nucleotide analog ribavirin. In terms of biological role, forms an icosahedral capsid of pseudo T=3 symmetry with capsid proteins VP2 and VP3. The capsid is 300 Angstroms in diameter, composed of 60 copies of each capsid protein and enclosing the viral positive strand RNA genome. Capsid protein VP1 mainly forms the vertices of the capsid. Capsid protein VP1 interacts with host cell receptor to provide virion attachment to target host cells. This attachment induces virion internalization. Tyrosine kinases are probably involved in the entry process. After binding to its receptor, the capsid undergoes conformational changes. Capsid protein VP1 N-terminus (that contains an amphipathic alpha-helix) and capsid protein VP4 are externalized. Together, they shape a pore in the host membrane through which viral genome is translocated to host cell cytoplasm. Its function is as follows. Forms an icosahedral capsid of pseudo T=3 symmetry with capsid proteins VP2 and VP3. The capsid is 300 Angstroms in diameter, composed of 60 copies of each capsid protein and enclosing the viral positive strand RNA genome. Functionally, lies on the inner surface of the capsid shell. After binding to the host receptor, the capsid undergoes conformational changes. Capsid protein VP4 is released, Capsid protein VP1 N-terminus is externalized, and together, they shape a pore in the host membrane through which the viral genome is translocated into the host cell cytoplasm. Component of immature procapsids, which is cleaved into capsid proteins VP4 and VP2 after maturation. Allows the capsid to remain inactive before the maturation step. In terms of biological role, cysteine protease that cleaves viral polyprotein and specific host proteins. It is responsible for the autocatalytic cleavage between the P1 and P2 regions, which is the first cleavage occurring in the polyprotein. Also cleaves the host translation initiation factor EIF4G1, in order to shut down the capped cellular mRNA translation. Inhibits the host nucleus-cytoplasm protein and RNA trafficking by cleaving host members of the nuclear pores. Counteracts stress granule formation probably by antagonizing its assembly or promoting its dissassembly. Its function is as follows. Plays an essential role in the virus replication cycle by acting as a viroporin. Creates a pore in the host endoplasmic reticulum and as a consequence releases Ca2+ in the cytoplasm of infected cell. In turn, high levels of cytoplasmic calcium may trigger membrane trafficking and transport of viral ER-associated proteins to viroplasms, sites of viral genome replication. Functionally, induces and associates with structural rearrangements of intracellular membranes. Displays RNA-binding, nucleotide binding and NTPase activities. May play a role in virion morphogenesis and viral RNA encapsidation by interacting with the capsid protein VP3. Localizes the viral replication complex to the surface of membranous vesicles. Together with protein 3CD binds the Cis-Active RNA Element (CRE) which is involved in RNA synthesis initiation. Acts as a cofactor to stimulate the activity of 3D polymerase, maybe through a nucleid acid chaperone activity. In terms of biological role, localizes the viral replication complex to the surface of membranous vesicles. It inhibits host cell endoplasmic reticulum-to-Golgi apparatus transport and causes the disassembly of the Golgi complex, possibly through GBF1 interaction. This would result in depletion of MHC, trail receptors and IFN receptors at the host cell surface. Plays an essential role in viral RNA replication by recruiting ACBD3 and PI4KB at the viral replication sites, thereby allowing the formation of the rearranged membranous structures where viral replication takes place. Its function is as follows. Acts as a primer for viral RNA replication and remains covalently bound to viral genomic RNA. VPg is uridylylated prior to priming replication into VPg-pUpU. The oriI viral genomic sequence may act as a template for this. The VPg-pUpU is then used as primer on the genomic RNA poly(A) by the RNA-dependent RNA polymerase to replicate the viral genome. During genome replication, the VPg-RNA linkage is removed by the host TDP2, thereby accelerating replication. During the late stage of the replication cycle, host TDP2 is excluded from sites of viral RNA synthesis and encapsidation, allowing for the generation of progeny virions. Functionally, involved in the viral replication complex and viral polypeptide maturation. It exhibits protease activity with a specificity and catalytic efficiency that is different from protease 3C. Protein 3CD lacks polymerase activity. Protein 3CD binds to the 5'UTR of the viral genome. Replicates the viral genomic RNA on the surface of intracellular membranes. May form linear arrays of subunits that propagate along a strong head-to-tail interaction called interface-I. Covalently attaches UMP to a tyrosine of VPg, which is used to prime RNA synthesis. The positive stranded RNA genome is first replicated at virus induced membranous vesicles, creating a dsRNA genomic replication form. This dsRNA is then used as template to synthesize positive stranded RNA genomes. ss(+)RNA genomes are either translated, replicated or encapsidated. In terms of biological role, major viral protease that mediates proteolytic processing of the polyprotein. Cleaves host EIF5B, contributing to host translation shutoff. Also cleaves host PABPC1, contributing to host translation shutoff. Cleaves host NLRP1, triggers host N-glycine-mediated degradation of the autoinhibitory NLRP1 N-terminal fragment. The protein is Genome polyprotein of Bos taurus (Bovine).